The following is a 196-amino-acid chain: Carnitine operon protein CaiE (196 aa).

The segment at Thr-173–Arg-196 is disordered. Residues Gln-187–Arg-196 show a composition bias toward polar residues.

Belongs to the transferase hexapeptide repeat family.

It participates in amine and polyamine metabolism; carnitine metabolism. Functionally, overproduction of CaiE stimulates the activity of CaiB and CaiD. In Escherichia coli O7:K1 (strain IAI39 / ExPEC), this protein is Carnitine operon protein CaiE.